A 301-amino-acid chain; its full sequence is HTH-type transcriptional regulator EstR (301 aa).

Residues 5 to 62 enclose the HTH lysR-type domain; that stretch reads PSLRQLSYLVTLSETLHFTEAARRSFVTQSTLSGGIMELERLLGGVLVERDRQNVRLT. A DNA-binding region (H-T-H motif) is located at residues 22–41; that stretch reads FTEAARRSFVTQSTLSGGIM.

It belongs to the LysR transcriptional regulatory family.

Its function is as follows. Transcriptional regulator of the esterase operon. This chain is HTH-type transcriptional regulator EstR (estR), found in Acinetobacter baylyi (strain ATCC 33305 / BD413 / ADP1).